Consider the following 387-residue polypeptide: Lactosylceramide alpha-2,3-sialyltransferase (387 aa).

Residues 1-33 are Cytoplasmic-facing; that stretch reads MPNEFTSAKLRSDCSRTSLQWYTQTQHKMRRPS. A helical; Signal-anchor for type II membrane protein transmembrane segment spans residues 34–54; the sequence is LLLKDILKCMLVVFGVWLLYI. At 55 to 387 the chain is on the extracellular side; sequence LKLNYTAEEC…VVQDLSGGIH (333 aa). N-linked (GlcNAc...) asparagine glycans are attached at residues Asn58 and Asn208. Cys167 and Cys325 are joined by a disulfide.

Belongs to the glycosyltransferase 29 family.

It localises to the golgi apparatus membrane. It catalyses the reaction a beta-D-Gal-(1-&gt;4)-beta-D-Glc-(1&lt;-&gt;1)-Cer(d18:1(4E)) + CMP-N-acetyl-beta-neuraminate = a ganglioside GM3 (d18:1(4E)) + CMP + H(+). It carries out the reaction ganglioside GA2 (d18:1(4E)/18:0) + CMP-N-acetyl-beta-neuraminate = ganglioside GM2 (d18:1(4E)/18:0) + CMP + H(+). The catalysed reaction is a beta-D-Gal-(1&lt;-&gt;1')-ceramide + CMP-N-acetyl-beta-neuraminate = N-acetyl-alpha-neuraminosyl-(2-&gt;3)-beta-D-galactosyl-(1&lt;-&gt;1')-ceramide + CMP + H(+). The enzyme catalyses ganglioside GA1 (d18:1(4E)/18:0) + CMP-N-acetyl-beta-neuraminate = ganglioside GM1 (d18:1(4E)/18:0) + CMP + H(+). In terms of biological role, transfers the sialyl group (N-acetyl-alpha-neuraminyl or NeuAc) from CMP-NeuAc to the non-reducing terminal galactose (Gal) of glycosphingolipids forming gangliosides (important molecules involved in the regulation of multiple cellular processes, including cell proliferation and differentiation, apoptosis, embryogenesis, development, and oncogenesis). Mainly involved in the biosynthesis of ganglioside GM3 but can also use different glycolipids as substrate acceptors such as D-galactosylceramide (GalCer), asialo-GM2 (GA2) and asialo-GM1 (GA1), although less preferentially than beta-D-Gal-(1-&gt;4)-beta-D-Glc-(1&lt;-&gt;1)-Cer (LacCer). The polypeptide is Lactosylceramide alpha-2,3-sialyltransferase (St3gal5) (Rattus norvegicus (Rat)).